The sequence spans 760 residues: ATP-dependent zinc metalloprotease FtsH (760 aa).

Over 1–5 (MNRKN) the chain is Cytoplasmic. The helical transmembrane segment at 6–26 (VTRTITAIAVVVLLGWSFFYF) threads the bilayer. At 27–110 (SDDTRGYKPV…KVSTVVNQGS (84 aa)) the chain is on the extracellular side. The chain crosses the membrane as a helical span at residues 111–131 (ILGELLVYVLPLLLLVGLFVM). The Cytoplasmic segment spans residues 132–760 (FSRMQGGARM…EVSRTKPAHG (629 aa)). Position 203–210 (203–210 (GPPGTGKT)) interacts with ATP. Histidine 425 lines the Zn(2+) pocket. The active site involves glutamate 426. The Zn(2+) site is built by histidine 429 and aspartate 501. Positions 616-760 (DFGGRIPSDK…EVSRTKPAHG (145 aa)) are disordered. Residues 650–669 (AFKAAIAQATQAAEAARSDA) show a composition bias toward low complexity. Positions 740–750 (GSDESSAEQDD) are enriched in acidic residues.

It in the central section; belongs to the AAA ATPase family. The protein in the C-terminal section; belongs to the peptidase M41 family. As to quaternary structure, homohexamer. Zn(2+) serves as cofactor.

The protein localises to the cell membrane. In terms of biological role, acts as a processive, ATP-dependent zinc metallopeptidase for both cytoplasmic and membrane proteins. Plays a role in the quality control of integral membrane proteins. The protein is ATP-dependent zinc metalloprotease FtsH of Mycobacterium bovis (strain ATCC BAA-935 / AF2122/97).